A 421-amino-acid chain; its full sequence is Succinate--CoA ligase [ADP-forming] subunit beta, mitochondrial (421 aa).

The transit peptide at 1–26 (MRGLVNKLVSRSLSISGKWQNQQLRR) directs the protein to the mitochondrion. One can recognise an ATP-grasp domain in the interval 35–278 (AELMGKYGVN…PTQEDPREVA (244 aa)). ATP-binding positions include K74, 81–83 (GRG), and E141. N233 and D247 together coordinate Mg(2+). Residues N298 and 355 to 357 (GIM) contribute to the substrate site.

It belongs to the succinate/malate CoA ligase beta subunit family. As to quaternary structure, heterodimer of an alpha and a beta subunit. Requires Mg(2+) as cofactor.

The protein resides in the mitochondrion. The enzyme catalyses succinate + ATP + CoA = succinyl-CoA + ADP + phosphate. Its pathway is carbohydrate metabolism; tricarboxylic acid cycle; succinate from succinyl-CoA (ligase route): step 1/1. Its function is as follows. Succinyl-CoA synthetase functions in the citric acid cycle (TCA), coupling the hydrolysis of succinyl-CoA to the synthesis of ATP and thus represents the only step of substrate-level phosphorylation in the TCA. The beta subunit provides nucleotide specificity of the enzyme and binds the substrate succinate, while the binding sites for coenzyme A and phosphate are found in the alpha subunit. This Arabidopsis thaliana (Mouse-ear cress) protein is Succinate--CoA ligase [ADP-forming] subunit beta, mitochondrial.